The following is a 153-amino-acid chain: 6,7-dimethyl-8-ribityllumazine synthase (153 aa).

5-amino-6-(D-ribitylamino)uracil is bound by residues phenylalanine 21, 55 to 57 (AFE), and 79 to 81 (TVI). Position 84-85 (84-85 (AT)) interacts with (2S)-2-hydroxy-3-oxobutyl phosphate. Catalysis depends on histidine 87, which acts as the Proton donor. Phenylalanine 112 is a 5-amino-6-(D-ribitylamino)uracil binding site. Arginine 126 is a binding site for (2S)-2-hydroxy-3-oxobutyl phosphate.

Belongs to the DMRL synthase family. Forms an icosahedral capsid composed of 60 subunits, arranged as a dodecamer of pentamers.

It carries out the reaction (2S)-2-hydroxy-3-oxobutyl phosphate + 5-amino-6-(D-ribitylamino)uracil = 6,7-dimethyl-8-(1-D-ribityl)lumazine + phosphate + 2 H2O + H(+). It participates in cofactor biosynthesis; riboflavin biosynthesis; riboflavin from 2-hydroxy-3-oxobutyl phosphate and 5-amino-6-(D-ribitylamino)uracil: step 1/2. Catalyzes the formation of 6,7-dimethyl-8-ribityllumazine by condensation of 5-amino-6-(D-ribitylamino)uracil with 3,4-dihydroxy-2-butanone 4-phosphate. This is the penultimate step in the biosynthesis of riboflavin. The polypeptide is 6,7-dimethyl-8-ribityllumazine synthase (Bacillus cereus (strain 03BB102)).